Here is a 206-residue protein sequence, read N- to C-terminus: ATP-dependent dethiobiotin synthetase BioD (206 aa).

Position 12-17 (12-17 (DSGKTL)) interacts with ATP. T16 contributes to the Mg(2+) binding site. K32 is an active-site residue. E99 lines the Mg(2+) pocket. 99–102 (EGAG) serves as a coordination point for ATP.

The protein belongs to the dethiobiotin synthetase family. In terms of assembly, homodimer. The cofactor is Mg(2+).

It is found in the cytoplasm. It carries out the reaction (7R,8S)-7,8-diammoniononanoate + CO2 + ATP = (4R,5S)-dethiobiotin + ADP + phosphate + 3 H(+). Its pathway is cofactor biosynthesis; biotin biosynthesis; biotin from 7,8-diaminononanoate: step 1/2. Catalyzes a mechanistically unusual reaction, the ATP-dependent insertion of CO2 between the N7 and N8 nitrogen atoms of 7,8-diaminopelargonic acid (DAPA, also called 7,8-diammoniononanoate) to form a ureido ring. The sequence is that of ATP-dependent dethiobiotin synthetase BioD from Cytophaga hutchinsonii (strain ATCC 33406 / DSM 1761 / CIP 103989 / NBRC 15051 / NCIMB 9469 / D465).